The following is a 115-amino-acid chain: MDKSKRPFLKSKRSFRRRLPPIQSGDRIDYRNMSLISRFISEQGKILSRRVNRLTLKQQRLITLAIKQARILSLLPFKRKGFQISESTARTNALKARTQNKDQKKEKFQINKKKK.

Residues 91–115 (TNALKARTQNKDQKKEKFQINKKKK) form a disordered region. The segment covering 99–109 (QNKDQKKEKFQ) has biased composition (basic and acidic residues).

Belongs to the bacterial ribosomal protein bS18 family. As to quaternary structure, part of the 30S ribosomal subunit.

The protein resides in the plastid. The protein localises to the chloroplast. The sequence is that of Small ribosomal subunit protein bS18c from Ipomoea purpurea (Common morning glory).